The following is a 478-amino-acid chain: Endoplasmic reticulum oxidoreductin-1 (478 aa).

Residues 1-20 (MREPLLQLIVLSLIIIVVNT) form the signal peptide. 6 disulfide bridges follow: Cys-28-Cys-41, Cys-30-Cys-39, Cys-79-Cys-384, Cys-88-Cys-93, Cys-209-Cys-230, and Cys-387-Cys-390. The tract at residues 117 to 143 (AAVKEEEDDDAEKCADAGNNIDPMDRT) is disordered. Residues Arg-188, Thr-190, and Trp-201 each contribute to the FAD site. Residues Ser-241, His-244, Arg-283, and Arg-295 each contribute to the FAD site. An N-linked (GlcNAc...) asparagine glycan is attached at Asn-377. The tract at residues 459–478 (ESVMNTAADGPPRKSNKIDL) is disordered.

It belongs to the EROs family. As to quaternary structure, may function both as a monomer and a homodimer. Requires FAD as cofactor.

The protein localises to the endoplasmic reticulum membrane. In terms of biological role, oxidoreductase involved in disulfide bond formation in the endoplasmic reticulum. Efficiently reoxidizes pdi-1, the enzyme catalyzing protein disulfide formation, in order to allow pdi-1 to sustain additional rounds of disulfide formation. Following pdi reoxidation, passes its electrons to molecular oxygen via FAD, leading to the production of reactive oxygen species (ROS) in the cell. The chain is Endoplasmic reticulum oxidoreductin-1 (ero-1) from Caenorhabditis elegans.